Consider the following 339-residue polypeptide: Anthranilate phosphoribosyltransferase (339 aa).

Residues glycine 80, 83–84, threonine 88, 90–93, 108–116, and serine 120 each bind 5-phospho-alpha-D-ribose 1-diphosphate; these read GD, NIST, and KHGNRAMSS. Residue glycine 80 coordinates anthranilate. Serine 92 serves as a coordination point for Mg(2+). Asparagine 111 serves as a coordination point for anthranilate. Arginine 166 serves as a coordination point for anthranilate. Positions 225 and 226 each coordinate Mg(2+).

It belongs to the anthranilate phosphoribosyltransferase family. Homodimer. Requires Mg(2+) as cofactor.

The enzyme catalyses N-(5-phospho-beta-D-ribosyl)anthranilate + diphosphate = 5-phospho-alpha-D-ribose 1-diphosphate + anthranilate. Its pathway is amino-acid biosynthesis; L-tryptophan biosynthesis; L-tryptophan from chorismate: step 2/5. In terms of biological role, catalyzes the transfer of the phosphoribosyl group of 5-phosphorylribose-1-pyrophosphate (PRPP) to anthranilate to yield N-(5'-phosphoribosyl)-anthranilate (PRA). In Chloroflexus aurantiacus (strain ATCC 29366 / DSM 635 / J-10-fl), this protein is Anthranilate phosphoribosyltransferase.